A 269-amino-acid polypeptide reads, in one-letter code: 4-hydroxy-tetrahydrodipicolinate reductase (269 aa).

Residues 10-15, glutamate 36, 99-101, and 123-126 each bind NAD(+); these read GANGRM, GTT, and AANF. Histidine 156 (proton donor/acceptor) is an active-site residue. Histidine 157 serves as a coordination point for (S)-2,3,4,5-tetrahydrodipicolinate. Lysine 160 acts as the Proton donor in catalysis. 166-167 is a (S)-2,3,4,5-tetrahydrodipicolinate binding site; it reads GT.

The protein belongs to the DapB family.

The protein resides in the cytoplasm. The enzyme catalyses (S)-2,3,4,5-tetrahydrodipicolinate + NAD(+) + H2O = (2S,4S)-4-hydroxy-2,3,4,5-tetrahydrodipicolinate + NADH + H(+). The catalysed reaction is (S)-2,3,4,5-tetrahydrodipicolinate + NADP(+) + H2O = (2S,4S)-4-hydroxy-2,3,4,5-tetrahydrodipicolinate + NADPH + H(+). It functions in the pathway amino-acid biosynthesis; L-lysine biosynthesis via DAP pathway; (S)-tetrahydrodipicolinate from L-aspartate: step 4/4. Its function is as follows. Catalyzes the conversion of 4-hydroxy-tetrahydrodipicolinate (HTPA) to tetrahydrodipicolinate. This chain is 4-hydroxy-tetrahydrodipicolinate reductase, found in Neisseria meningitidis serogroup C (strain 053442).